The chain runs to 137 residues: MSFIKEFREFAMRGNVVDLAVGVIIGAAFGKIVSSLVADIIMPPLGLLIGGIDFKQFAFTLREAQGDIPAVVMHYGVFIQNVFDFVIVAFAIFVAIKLINRLNRKKAEEPAAPPAPSKEEVLLGEIRDLLKEQNNRS.

2 consecutive transmembrane segments (helical) span residues 10–30 and 76–96; these read FAMR…AAFG and GVFI…FVAI.

This sequence belongs to the MscL family. Homopentamer.

It is found in the cell inner membrane. Channel that opens in response to stretch forces in the membrane lipid bilayer. May participate in the regulation of osmotic pressure changes within the cell. This is Large-conductance mechanosensitive channel from Salmonella typhimurium (strain LT2 / SGSC1412 / ATCC 700720).